Consider the following 454-residue polypeptide: Bifunctional protein GlmU (454 aa).

The segment at 1–226 (MALNVVILAA…AIEVEGANNR (226 aa)) is pyrophosphorylase. Residues 8-11 (LAAG), Lys22, Gln73, 78-79 (GT), 100-102 (YGD), Gly137, Glu151, Asn166, and Asn224 each bind UDP-N-acetyl-alpha-D-glucosamine. Asp102 is a binding site for Mg(2+). Asn224 contributes to the Mg(2+) binding site. The segment at 227-247 (VQLAQLERAYQARAAEKLMLE) is linker. The segment at 248-454 (GANLRDPARI…GWTRPVKQKK (207 aa)) is N-acetyltransferase. UDP-N-acetyl-alpha-D-glucosamine-binding residues include Arg330 and Lys348. The active-site Proton acceptor is His360. 2 residues coordinate UDP-N-acetyl-alpha-D-glucosamine: Tyr363 and Asn374. Residues Ala377, 383–384 (NY), Ser402, Ala420, and Arg437 each bind acetyl-CoA.

The protein in the N-terminal section; belongs to the N-acetylglucosamine-1-phosphate uridyltransferase family. In the C-terminal section; belongs to the transferase hexapeptide repeat family. As to quaternary structure, homotrimer. Requires Mg(2+) as cofactor.

Its subcellular location is the cytoplasm. It carries out the reaction alpha-D-glucosamine 1-phosphate + acetyl-CoA = N-acetyl-alpha-D-glucosamine 1-phosphate + CoA + H(+). The enzyme catalyses N-acetyl-alpha-D-glucosamine 1-phosphate + UTP + H(+) = UDP-N-acetyl-alpha-D-glucosamine + diphosphate. The protein operates within nucleotide-sugar biosynthesis; UDP-N-acetyl-alpha-D-glucosamine biosynthesis; N-acetyl-alpha-D-glucosamine 1-phosphate from alpha-D-glucosamine 6-phosphate (route II): step 2/2. Its pathway is nucleotide-sugar biosynthesis; UDP-N-acetyl-alpha-D-glucosamine biosynthesis; UDP-N-acetyl-alpha-D-glucosamine from N-acetyl-alpha-D-glucosamine 1-phosphate: step 1/1. It functions in the pathway bacterial outer membrane biogenesis; LPS lipid A biosynthesis. Its function is as follows. Catalyzes the last two sequential reactions in the de novo biosynthetic pathway for UDP-N-acetylglucosamine (UDP-GlcNAc). The C-terminal domain catalyzes the transfer of acetyl group from acetyl coenzyme A to glucosamine-1-phosphate (GlcN-1-P) to produce N-acetylglucosamine-1-phosphate (GlcNAc-1-P), which is converted into UDP-GlcNAc by the transfer of uridine 5-monophosphate (from uridine 5-triphosphate), a reaction catalyzed by the N-terminal domain. The polypeptide is Bifunctional protein GlmU (Shewanella loihica (strain ATCC BAA-1088 / PV-4)).